The sequence spans 226 residues: UPF0758 protein LL1007 (226 aa).

An MPN domain is found at 103-225 (QVLSSREYGL…YFSFREEEIR (123 aa)). Positions 174, 176, and 187 each coordinate Zn(2+). Positions 174-187 (HNHPSGNLKPSQAD) match the JAMM motif motif.

Belongs to the UPF0758 family.

This is UPF0758 protein LL1007 from Lactococcus lactis subsp. lactis (strain IL1403) (Streptococcus lactis).